The following is a 148-amino-acid chain: MERHYYTYLIKEEFANHYFGRESVMFELFQDYHWTSLEKQQYEMTEKQIQYITQPIPILHMHQRLKMNLNKTDYRQLDYIYRIALPKAKGHATFMMKEHMIEIVASGDYEAETIFFEVLRKVSPCFLAMDFNSKRYGWLNPVKERNFV.

This sequence belongs to the SirA family. As to quaternary structure, interacts with DnaA. Forms a 1:1 complex with domain I of DnaA.

Its subcellular location is the cytoplasm. Inhibits DNA replication initiation during sporulation, preventing overinitiation and thus enforcing diploidy; probably the main regulator of sporulation replication initiation under Spo0A control. During sporulation SirA prevents DnaA association with the replication origin to prevent excessive chromosome replication. Alternatively SirA binds to domain I of DnaA and prevent its interaction with DnaD, preventing DNA replication initiation. Upon ectopic expression during vegetative growth reduces chromosome copy number, leading to elongated cells with that can have a single nucleoid or be anucleate. Ectopic expression during vegetative growth blocks DnaA at oriC while blocking recruitment of DnaD to oriC. Plays a significant role during the onset of sporulation. The chain is Sporulation inhibitor of replication protein SirA from Bacillus subtilis (strain 168).